Reading from the N-terminus, the 262-residue chain is Diaminopimelate epimerase (262 aa).

Substrate contacts are provided by Asn17, Gln45, and Asn63. Cys72 (proton donor) is an active-site residue. Residues 73-74, Asn154, Asn187, and 205-206 each bind substrate; these read GN and ER. Cys214 functions as the Proton acceptor in the catalytic mechanism. 215–216 contributes to the substrate binding site; that stretch reads GS.

Belongs to the diaminopimelate epimerase family. Homodimer.

It localises to the cytoplasm. It catalyses the reaction (2S,6S)-2,6-diaminopimelate = meso-2,6-diaminopimelate. It functions in the pathway amino-acid biosynthesis; L-lysine biosynthesis via DAP pathway; DL-2,6-diaminopimelate from LL-2,6-diaminopimelate: step 1/1. In terms of biological role, catalyzes the stereoinversion of LL-2,6-diaminopimelate (L,L-DAP) to meso-diaminopimelate (meso-DAP), a precursor of L-lysine and an essential component of the bacterial peptidoglycan. The sequence is that of Diaminopimelate epimerase from Wolbachia sp. subsp. Drosophila simulans (strain wRi).